The chain runs to 157 residues: Aspartate carbamoyltransferase regulatory chain (157 aa).

Residues Cys108, Cys113, Cys138, and Cys141 each contribute to the Zn(2+) site.

The protein belongs to the PyrI family. As to quaternary structure, contains catalytic and regulatory chains. Requires Zn(2+) as cofactor.

In terms of biological role, involved in allosteric regulation of aspartate carbamoyltransferase. The chain is Aspartate carbamoyltransferase regulatory chain from Korarchaeum cryptofilum (strain OPF8).